The sequence spans 443 residues: Ribosomal protein uS12 methylthiotransferase RimO (443 aa).

The MTTase N-terminal domain maps to 8-118; that stretch reads PKVGFVSLGC…VVNAVHEVVP (111 aa). Residues Cys17, Cys53, Cys82, Cys151, Cys155, and Cys158 each contribute to the [4Fe-4S] cluster site. Residues 137–376 enclose the Radical SAM core domain; that stretch reads LTPRHYAYLK…AHQQAISSAR (240 aa). Residues 378 to 443 enclose the TRAM domain; sequence QLRIGKEIEV…DEYDMWAEPV (66 aa).

Belongs to the methylthiotransferase family. RimO subfamily. Requires [4Fe-4S] cluster as cofactor.

It is found in the cytoplasm. It carries out the reaction L-aspartate(89)-[ribosomal protein uS12]-hydrogen + (sulfur carrier)-SH + AH2 + 2 S-adenosyl-L-methionine = 3-methylsulfanyl-L-aspartate(89)-[ribosomal protein uS12]-hydrogen + (sulfur carrier)-H + 5'-deoxyadenosine + L-methionine + A + S-adenosyl-L-homocysteine + 2 H(+). Functionally, catalyzes the methylthiolation of an aspartic acid residue of ribosomal protein uS12. In Pseudomonas putida (strain W619), this protein is Ribosomal protein uS12 methylthiotransferase RimO.